We begin with the raw amino-acid sequence, 462 residues long: Aquaporin-1 (462 aa).

The span at 1–11 shows a compositional bias: polar residues; the sequence is MTMRSPLTNDH. A disordered region spans residues 1-24; that stretch reads MTMRSPLTNDHPQPLRASPLSEHD. The Cytoplasmic segment spans residues 1–146; sequence MTMRSPLTND…KWMNSDWKNH (146 aa). A helical membrane pass occupies residues 147-167; that stretch reads IVAVIGELIGTSLFLFFGYAG. Residues 168-182 lie on the Extracellular side of the membrane; that stretch reads IEVAKLQGREPPDLE. The helical transmembrane segment at 183-203 threads the bilayer; sequence VLFYISATFGASLMVTAWIFF. Residues 204–229 lie on the Cytoplasmic side of the membrane; the sequence is RISGGLFNPAVTLALAILKAVSPIRA. The NPA 1 signature appears at 211-213; the sequence is NPA. The chain crosses the membrane as a helical span at residues 230–250; the sequence is FLLVITQLGASCLAAILVQEI. The Extracellular segment spans residues 251–269; it reads FPKQLDVATTLGSGTSMGQ. Residues 270 to 290 form a helical membrane-spanning segment; it reads GFVIEAITTAALIFTIIMLAV. Residues 291 to 296 lie on the Cytoplasmic side of the membrane; sequence EKHKAT. Residues 297–317 traverse the membrane as a helical segment; sequence FVAPIGIGLALFVAHMVAVPF. Topologically, residues 318 to 341 are extracellular; that stretch reads TGASLNPARSFGPSAIVWNFPREH. The NPA 2 signature appears at 323–325; the sequence is NPA. The chain crosses the membrane as a helical span at residues 342 to 362; that stretch reads WIYWVGPILGAGLAVLFFRLI. Over 363 to 462 the chain is Cytoplasmic; sequence KLMEYEMANP…WRRQQYRNVV (100 aa). The interval 407–433 is disordered; the sequence is GKSWYRDDSSSGSMRRKESVNSFTGGR. Positions 410 to 425 are enriched in basic and acidic residues; sequence WYRDDSSSGSMRRKES.

The protein belongs to the MIP/aquaporin (TC 1.A.8) family.

The protein resides in the membrane. It catalyses the reaction H2O(in) = H2O(out). Functionally, water channel required to facilitate the transport of water across membranes. Involved in conidiation. This chain is Aquaporin-1, found in Botryotinia fuckeliana (strain B05.10) (Noble rot fungus).